We begin with the raw amino-acid sequence, 221 residues long: Serotriflin (221 aa).

One can recognise an SCP domain in the interval 19-147; it reads LDKHNALRRS…SYNYYYVCHY (129 aa). The N-linked (GlcNAc...) asparagine glycan is linked to asparagine 48. 8 disulfides stabilise this stretch: cysteine 56/cysteine 134, cysteine 73/cysteine 148, cysteine 129/cysteine 145, cysteine 167/cysteine 174, cysteine 170/cysteine 179, cysteine 183/cysteine 216, cysteine 192/cysteine 210, and cysteine 201/cysteine 214. A ShKT domain is found at 183 to 216; that stretch reads CKHVDRYSNCNSLVQQISCQSNNMNTDCPASCFC.

Forms a stable, non-covalent complex with SSP-2.

The protein localises to the secreted. This chain is Serotriflin, found in Protobothrops flavoviridis (Habu).